The primary structure comprises 309 residues: Homoserine kinase (309 aa).

85 to 95 (PYGLGLGSSGS) is a binding site for ATP.

Belongs to the GHMP kinase family. Homoserine kinase subfamily.

It is found in the cytoplasm. It carries out the reaction L-homoserine + ATP = O-phospho-L-homoserine + ADP + H(+). It participates in amino-acid biosynthesis; L-threonine biosynthesis; L-threonine from L-aspartate: step 4/5. Its function is as follows. Catalyzes the ATP-dependent phosphorylation of L-homoserine to L-homoserine phosphate. The polypeptide is Homoserine kinase (Thermoplasma volcanium (strain ATCC 51530 / DSM 4299 / JCM 9571 / NBRC 15438 / GSS1)).